A 354-amino-acid polypeptide reads, in one-letter code: Small ribosomal subunit biogenesis GTPase RsgA 1 (354 aa).

The span at Met-1–Lys-24 shows a compositional bias: basic residues. The segment at Met-1 to Glu-28 is disordered. A CP-type G domain is found at Tyr-113–Phe-274. GTP is bound by residues Asn-160–Asp-163 and Gly-214–Ser-222. 4 residues coordinate Zn(2+): Cys-298, Cys-303, His-305, and Cys-311.

Belongs to the TRAFAC class YlqF/YawG GTPase family. RsgA subfamily. Monomer. Associates with 30S ribosomal subunit, binds 16S rRNA. Requires Zn(2+) as cofactor.

Its subcellular location is the cytoplasm. In terms of biological role, one of several proteins that assist in the late maturation steps of the functional core of the 30S ribosomal subunit. Helps release RbfA from mature subunits. May play a role in the assembly of ribosomal proteins into the subunit. Circularly permuted GTPase that catalyzes slow GTP hydrolysis, GTPase activity is stimulated by the 30S ribosomal subunit. The sequence is that of Small ribosomal subunit biogenesis GTPase RsgA 1 from Vibrio parahaemolyticus serotype O3:K6 (strain RIMD 2210633).